Consider the following 132-residue polypeptide: Ribosome-binding factor A (132 aa).

It belongs to the RbfA family. In terms of assembly, monomer. Binds 30S ribosomal subunits, but not 50S ribosomal subunits or 70S ribosomes.

The protein localises to the cytoplasm. In terms of biological role, one of several proteins that assist in the late maturation steps of the functional core of the 30S ribosomal subunit. Associates with free 30S ribosomal subunits (but not with 30S subunits that are part of 70S ribosomes or polysomes). Required for efficient processing of 16S rRNA. May interact with the 5'-terminal helix region of 16S rRNA. The sequence is that of Ribosome-binding factor A from Edwardsiella ictaluri (strain 93-146).